Consider the following 244-residue polypeptide: Uridylate kinase (244 aa).

ATP is bound at residue 17–20; that stretch reads KVSG. The tract at residues 25–30 is involved in allosteric activation by GTP; it reads GDKGFG. Residue G59 participates in UMP binding. ATP is bound by residues G60 and R64. Residues D80 and 141-148 contribute to the UMP site; that span reads VGNPFFTT. The ATP site is built by T168, Q169, Y174, and D177.

It belongs to the UMP kinase family. In terms of assembly, homohexamer.

The protein localises to the cytoplasm. It carries out the reaction UMP + ATP = UDP + ADP. It participates in pyrimidine metabolism; CTP biosynthesis via de novo pathway; UDP from UMP (UMPK route): step 1/1. Its activity is regulated as follows. Allosterically activated by GTP. Inhibited by UTP. Catalyzes the reversible phosphorylation of UMP to UDP. In Ehrlichia ruminantium (strain Welgevonden), this protein is Uridylate kinase.